A 445-amino-acid polypeptide reads, in one-letter code: Exodeoxyribonuclease 7 large subunit (445 aa).

Belongs to the XseA family. In terms of assembly, heterooligomer composed of large and small subunits.

It is found in the cytoplasm. The enzyme catalyses Exonucleolytic cleavage in either 5'- to 3'- or 3'- to 5'-direction to yield nucleoside 5'-phosphates.. In terms of biological role, bidirectionally degrades single-stranded DNA into large acid-insoluble oligonucleotides, which are then degraded further into small acid-soluble oligonucleotides. The sequence is that of Exodeoxyribonuclease 7 large subunit from Shewanella halifaxensis (strain HAW-EB4).